Consider the following 596-residue polypeptide: Probable ATP-dependent RNA helicase DDX52 (596 aa).

Residue lysine 15 is modified to N6-acetyllysine. Serine 39 is modified (phosphoserine). The interval 68–94 is disordered; it reads LPDEEKTEESQIERKKQNRKKKKITSE. The Q motif signature appears at 163 to 191; that stretch reads QLDQEYKINSRLLQNILDAGFQTPTPIQM. The Helicase ATP-binding domain maps to 194–372; the sequence is IPVMLHGREL…RLNLDSVITV (179 aa). 207–214 contacts ATP; it reads APTGSGKT. Positions 316 to 319 match the DEAD box motif; the sequence is DESD. One can recognise a Helicase C-terminal domain in the interval 383–544; the sequence is TVEQELLFVG…PVPEYIKGFQ (162 aa). Residues 575 to 596 are disordered; sequence AKDKRKKVTGQNKKKVAPEDKS. The span at 577–589 shows a compositional bias: basic residues; it reads DKRKKVTGQNKKK.

This sequence belongs to the DEAD box helicase family. DDX52/ROK1 subfamily.

It is found in the nucleus. Its subcellular location is the nucleolus. The enzyme catalyses ATP + H2O = ADP + phosphate + H(+). The protein is Probable ATP-dependent RNA helicase DDX52 (DDX52) of Bos taurus (Bovine).